A 268-amino-acid chain; its full sequence is MTPSKWDDEEESVSPPPVVNRRKFDDEEDEEVLDSWDAAEDSEVEREKAAKAAEAKAKAEAEAAAKKKSKAQRIEEHKAERRKNAEADSEEDEDEDEDEAEKRARLRRTEKDSDLKHAEDLFGDIDLNRSRNRGAPKAIVISDSADPTQAVDLSAMPLFKPTTKDQFARLTTTLIPLLTAHSKKPHYALWAQEFTKQLVKELNSGDVKKIASALTTVSNEKMREERAADKGSKKSKAAKTKVSLVANRDNKIDATSYDDDGLEDDDFM.

2 disordered regions span residues M1–H117 and N219–V242. Residues D26–V44 are compositionally biased toward acidic residues. A coiled-coil region spans residues E40 to E95. Composition is skewed to basic and acidic residues over residues E45–A65 and Q72–E86. Positions A87–E99 are enriched in acidic residues. Composition is skewed to basic and acidic residues over residues A100–H117 and E220–S232.

This sequence belongs to the eIF-3 subunit J family. In terms of assembly, component of the eukaryotic translation initiation factor 3 (eIF-3) complex.

It is found in the cytoplasm. In terms of biological role, component of the eukaryotic translation initiation factor 3 (eIF-3) complex, which is involved in protein synthesis of a specialized repertoire of mRNAs and, together with other initiation factors, stimulates binding of mRNA and methionyl-tRNAi to the 40S ribosome. The eIF-3 complex specifically targets and initiates translation of a subset of mRNAs involved in cell proliferation. This is Eukaryotic translation initiation factor 3 subunit J (hcr1) from Aspergillus clavatus (strain ATCC 1007 / CBS 513.65 / DSM 816 / NCTC 3887 / NRRL 1 / QM 1276 / 107).